The following is an 83-amino-acid chain: uncharacterized protein (83 aa).

This is an uncharacterized protein from Acidianus bottle-shaped virus (isolate Italy/Pozzuoli) (ABV).